The primary structure comprises 224 residues: UPF0758 protein PSPTO_0086 (224 aa).

Residues 102-224 enclose the MPN domain; sequence ALENPAQVRN…PLSMVEKGLM (123 aa). Positions 173, 175, and 186 each coordinate Zn(2+). Positions 173 to 186 match the JAMM motif motif; sequence HNHPSGITTPSRSD.

It belongs to the UPF0758 family.

This Pseudomonas syringae pv. tomato (strain ATCC BAA-871 / DC3000) protein is UPF0758 protein PSPTO_0086.